Here is a 758-residue protein sequence, read N- to C-terminus: Long-chain-alcohol oxidase FAO1 (758 aa).

The next 2 helical transmembrane spans lie at 102–122 and 155–175; these read IVLR…LVCL and PLAR…YFTW. 246–261 serves as a coordination point for FAD; sequence CDAVVVGSGCGGGVAA. The Proton acceptor role is filled by His-689.

It belongs to the GMC oxidoreductase family.

It is found in the membrane. It carries out the reaction a long-chain primary fatty alcohol + O2 = a long-chain fatty aldehyde + H2O2. In terms of biological role, long-chain fatty alcohol oxidase involved in the omega-oxidation pathway of lipid degradation. The sequence is that of Long-chain-alcohol oxidase FAO1 (FAO1) from Arabidopsis thaliana (Mouse-ear cress).